A 559-amino-acid polypeptide reads, in one-letter code: 2,3-bisphosphoglycerate-independent phosphoglycerate mutase (559 aa).

Mn(2+) contacts are provided by aspartate 28 and serine 81. The Phosphoserine intermediate role is filled by serine 81. Substrate contacts are provided by residues histidine 140, 170–171 (RD), arginine 206, arginine 213, 286–289 (RADR), and lysine 361. Aspartate 430, histidine 434, aspartate 471, histidine 472, and histidine 501 together coordinate Mn(2+).

The protein belongs to the BPG-independent phosphoglycerate mutase family. Monomer. The cofactor is Mn(2+). As to expression, found ubiquitously in germinating seed.

It is found in the cytoplasm. The enzyme catalyses (2R)-2-phosphoglycerate = (2R)-3-phosphoglycerate. The protein operates within carbohydrate degradation; glycolysis; pyruvate from D-glyceraldehyde 3-phosphate: step 3/5. Catalyzes the interconversion of 2-phosphoglycerate and 3-phosphoglycerate. The chain is 2,3-bisphosphoglycerate-independent phosphoglycerate mutase from Nicotiana tabacum (Common tobacco).